Here is a 1064-residue protein sequence, read N- to C-terminus: MARLFSPRPPPSEDLFYETYYSLSQQYPLLILLLVIVLCAIVALPAVAWASGRELTSDPSFLTTVLCALGGFSLLLGLASREQQLQRWTRPLSGLIWAALLALGYGFLFTGGVVSAWDQVSFFLFIIFTVYAMLPLGMRDAAAAGVISSLSHLLVLGLYLGWRPESQRDLLPQLAANAVLFLCGNVVGAYHKALMERALRATFREALSSLHSRRRLDTEKKHQEHLLLSILPAYLAREMKAEIMARLQAGQSSRPENTNNFHSLYVKRHQGVSVLYADIVGFTRLASECSPKELVLMLNELFGKFDQIAKEHECMRIKILGDCYYCVSGLPLSLPDHAINCVRMGLDMCRAIRKLRVATGVDINMRVGVHSGSVLCGVIGLQKWQYDVWSHDVTLANHMEAGGVPGRVHITGATLALLAGAYAVERADMEHRDPYLRELGEPTYLVIDPWAEEEDEKGTERGLLSSLEGHTMRPSLLMTRYLESWGAAKPFAHLSHVDSPASTSTPLPEKAFSPQWSLDRSRTPRGLHDELDTGDAKFFQVIEQLNSQKQWKQSKDFNLLTLYFREKEMEKQYRLSALPAFKYYAACTFLVFLSNFTIQMLVTTRPPALATTYSITFLLFLLLLFVCFSEHLTKCVQKGPKMLHWLPALSVLVATRPGLRVALGTATILLVFTMAVVSLLFLPVSSDCPFLAPNVSSVAFNTSWELPASLPLISIPYSMHCCVLGFLSCSLFLHMSFELKLLLLLLWLVASCSLFLHSHAWLSDCLIARLYQGSLGSRPGVLKEPKLMGAIYFFIFFFTLLVLARQNEYYCRLDFLWKKKLRQEREETETMENVLPAHVAPQLIGQNRRNEDLYHQSYECVCVLFASIPDFKEFYSESNINHEGLECLRLLNEIIADFDELLSKPKFSGVEKIKTIGSTYMAATGLNATPGQDTQQDAERSCSHLGTMVEFAVALGSKLGVINKHSFNNFRLRVGLNHGPVVAGVIGAQKPQYDIWGNTVNVASRMESTGVLGKIQVTEETARALQSLGYTCYSRGVIKVKGKGQLCTYFLNTDLTRTGSPSAS.

Topologically, residues 1–28 (MARLFSPRPPPSEDLFYETYYSLSQQYP) are cytoplasmic. 6 helical membrane passes run 29-50 (LLIL…VAWA), 61-80 (FLTT…GLAS), 94-117 (GLIW…VSAW), 120-138 (VSFF…PLGM), 141-162 (AAAA…YLGW), and 170-190 (LLPQ…VGAY). Over 191–582 (HKALMERALR…YRLSALPAFK (392 aa)) the chain is Cytoplasmic. Residues Asp278, Ile279, and Asp322 each coordinate Mg(2+). Residues 278 to 283 (DIVGFT), 320 to 322 (LGD), and Arg366 each bind ATP. Residues 498 to 523 (DSPASTSTPLPEKAFSPQWSLDRSRT) are disordered. Ser517 is modified (phosphoserine). At Thr533 the chain carries Phosphothreonine. The next 3 membrane-spanning stretches (helical) occupy residues 583-604 (YYAA…LVTT), 608-630 (ALAT…CFSE), and 661-684 (VALG…FLPV). Residues 685–707 (SSDCPFLAPNVSSVAFNTSWELP) are Extracellular-facing. N-linked (GlcNAc...) asparagine glycans are attached at residues Asn694 and Asn701. Transmembrane regions (helical) follow at residues 708-733 (ASLP…SLFL), 741-761 (LLLL…SHAW), and 788-804 (MGAI…LVLA). Residues 805–1064 (RQNEYYCRLD…LTRTGSPSAS (260 aa)) lie on the Cytoplasmic side of the membrane. ATP is bound by residues Lys914, 994-996 (DIW), 1001-1005 (NVASR), and Lys1041.

The protein belongs to the adenylyl cyclase class-4/guanylyl cyclase family. Requires Mg(2+) as cofactor. Mn(2+) is required as a cofactor. Widely distributed.

The protein resides in the cell membrane. It localises to the cytoplasm. The enzyme catalyses ATP = 3',5'-cyclic AMP + diphosphate. With respect to regulation, activated by forskolin. Insensitive to calcium/calmodulin. Stimulated by GNAS and by the G-protein beta and gamma subunit complex. Functionally, catalyzes the formation of the signaling molecule cAMP in response to G-protein signaling. The chain is Adenylate cyclase type 4 (Adcy4) from Rattus norvegicus (Rat).